Consider the following 249-residue polypeptide: Glucosamine-6-phosphate deaminase (249 aa).

The Proton acceptor; for enolization step role is filled by D67. Residue N136 is the For ring-opening step of the active site. Residue H138 is the Proton acceptor; for ring-opening step of the active site. E143 acts as the For ring-opening step in catalysis.

The protein belongs to the glucosamine/galactosamine-6-phosphate isomerase family. NagB subfamily.

It catalyses the reaction alpha-D-glucosamine 6-phosphate + H2O = beta-D-fructose 6-phosphate + NH4(+). The protein operates within amino-sugar metabolism; N-acetylneuraminate degradation; D-fructose 6-phosphate from N-acetylneuraminate: step 5/5. Functionally, catalyzes the reversible isomerization-deamination of glucosamine 6-phosphate (GlcN6P) to form fructose 6-phosphate (Fru6P) and ammonium ion. In Clostridium botulinum (strain Eklund 17B / Type B), this protein is Glucosamine-6-phosphate deaminase.